Here is a 267-residue protein sequence, read N- to C-terminus: NADP-dependent mannitol dehydrogenase (267 aa).

N108 and K141 together coordinate NADP(+). S160 acts as the Proton donor in catalysis. Residues Y175, K179, I207, and T209 each coordinate NADP(+). Y175 (proton acceptor) is an active-site residue. The active-site Lowers pKa of active site Tyr is K179.

It belongs to the short-chain dehydrogenases/reductases (SDR) family. In terms of assembly, exists as monomer, dimer and tetramer.

The catalysed reaction is D-mannitol + NADP(+) = D-fructose + NADPH + H(+). In terms of biological role, interconverts D-mannitol and D-fructose. Not active with fructose 6-phosphate or NADH. This chain is NADP-dependent mannitol dehydrogenase, found in Davidiella tassiana (Mycosphaerella tassiana).